We begin with the raw amino-acid sequence, 214 residues long: Phosphopantothenoylcysteine decarboxylase HAL3 (214 aa).

FMN contacts are provided by residues 30 to 32 and 55 to 57; these read GSV and TRA. Residue histidine 92 is the Proton donor of the active site. FMN is bound by residues 108 to 111 and alanine 142; that span reads SANT. 3 residues coordinate N-[(R)-4-phosphopantothenoyl]-L-cysteine: asparagine 144, arginine 174, and alanine 176. The active-site Proton donor is cysteine 177. Methionine 185 serves as a coordination point for N-[(R)-4-phosphopantothenoyl]-L-cysteine.

This sequence belongs to the HFCD (homooligomeric flavin containing Cys decarboxylase) superfamily. Homotrimer. FMN is required as a cofactor. As to expression, mainly expressed in stems, to a lower extent in flowers, leaves and fruits, and at basal levels in roots.

It localises to the cell membrane. The protein localises to the cytoplasm. The catalysed reaction is N-[(R)-4-phosphopantothenoyl]-L-cysteine + H(+) = (R)-4'-phosphopantetheine + CO2. It functions in the pathway cofactor biosynthesis; coenzyme A biosynthesis; CoA from (R)-pantothenate: step 3/5. In terms of biological role, involved in plant growth, and promotes salt and osmotic tolerance, probably via coenzyme A (CoA) accumulation and endogenous proline accumulation. Catalyzes the decarboxylation of 4'-phosphopantothenoylcysteine to 4'-phosphopantetheine, a key step in coenzyme A biosynthesis. Required for roots development. In Malus domestica (Apple), this protein is Phosphopantothenoylcysteine decarboxylase HAL3.